The sequence spans 219 residues: PKHD-type hydroxylase Plav_0037 (219 aa).

Positions 78–172 (NFIRILLSRY…RRAAVGWIRS (95 aa)) constitute a Fe2OG dioxygenase domain. Fe cation-binding residues include histidine 96, aspartate 98, and histidine 153. Arginine 163 provides a ligand contact to 2-oxoglutarate.

It depends on Fe(2+) as a cofactor. The cofactor is L-ascorbate.

This Parvibaculum lavamentivorans (strain DS-1 / DSM 13023 / NCIMB 13966) protein is PKHD-type hydroxylase Plav_0037.